Here is a 477-residue protein sequence, read N- to C-terminus: Bifunctional protein HldE (477 aa).

The segment at 1-318 (MKVTLSEFER…ENAVRGRADT (318 aa)) is ribokinase. N6-acetyllysine is present on Lys179. An ATP-binding site is contributed by 195–198 (NLSE). Asp264 is a catalytic residue. The interval 344–477 (MTNGVFDILH…IKKIQQDKKG (134 aa)) is cytidylyltransferase.

This sequence in the N-terminal section; belongs to the carbohydrate kinase PfkB family. It in the C-terminal section; belongs to the cytidylyltransferase family. As to quaternary structure, homodimer.

The catalysed reaction is D-glycero-beta-D-manno-heptose 7-phosphate + ATP = D-glycero-beta-D-manno-heptose 1,7-bisphosphate + ADP + H(+). It carries out the reaction D-glycero-beta-D-manno-heptose 1-phosphate + ATP + H(+) = ADP-D-glycero-beta-D-manno-heptose + diphosphate. Its pathway is nucleotide-sugar biosynthesis; ADP-L-glycero-beta-D-manno-heptose biosynthesis; ADP-L-glycero-beta-D-manno-heptose from D-glycero-beta-D-manno-heptose 7-phosphate: step 1/4. It participates in nucleotide-sugar biosynthesis; ADP-L-glycero-beta-D-manno-heptose biosynthesis; ADP-L-glycero-beta-D-manno-heptose from D-glycero-beta-D-manno-heptose 7-phosphate: step 3/4. Its function is as follows. Catalyzes the phosphorylation of D-glycero-D-manno-heptose 7-phosphate at the C-1 position to selectively form D-glycero-beta-D-manno-heptose-1,7-bisphosphate. Catalyzes the ADP transfer from ATP to D-glycero-beta-D-manno-heptose 1-phosphate, yielding ADP-D-glycero-beta-D-manno-heptose. This is Bifunctional protein HldE from Shigella boydii serotype 18 (strain CDC 3083-94 / BS512).